Here is a 1047-residue protein sequence, read N- to C-terminus: Jouberin (1047 aa).

Composition is skewed to basic and acidic residues over residues 1 to 17 (MEQE…EKVR) and 77 to 86 (LLHDDKLGSE). Disordered stretches follow at residues 1–44 (MEQE…LTEA) and 67–185 (EQLT…SPVH). The interaction with HAP1 stretch occupies residues 1-285 (MEQETPEKVD…IFNENFPYLL (285 aa)). The span at 87 to 96 (KRKKKKKKKV) shows a compositional bias: basic residues. A compositionally biased stretch (basic and acidic residues) spans 116–132 (GEQKKEGAPEGSHHREG). Residues 150–160 (PKPKKMKKKPK) show a composition bias toward basic residues. The span at 173–185 (GVHEITGRDSPVH) shows a compositional bias: basic and acidic residues. WD repeat units lie at residues 458–500 (AGER…FMRE), 503–542 (GHLN…TSTF), 546–586 (PHPS…DAAI), 593–632 (VHKS…TDVQ), 649–688 (FRGV…ARKF), 692–731 (ANYR…QVAM), and 736–777 (PFKS…AQQE). Position 854 is a phosphoserine (serine 854). An SH3 domain is found at 903-963 (DPPPMVVALY…PANHVASETL (61 aa)). Basic and acidic residues-rich tracts occupy residues 964–1003 (YRDS…RFLD) and 1012–1040 (GHSE…EPTV). The disordered stretch occupies residues 964 to 1047 (YRDSPPKVKE…PTVRKVTLIE (84 aa)). At serine 975 the chain carries Phosphoserine.

Self-associates. Part of the tectonic-like complex (also named B9 complex). Interacts with MKS1. Interacts with NPHP1; probably as heterodimers and/or AHI1(2):NPHP1(2) heterotetramers. Interacts (via SH3 domain) with the dynamin GTPase DNM2. Interacts with HAP1; probably as AHI1(2):HAP1(2) heterotetramers. Interacts with RAB8A. Interacts with CEND1. Interacts with SPATA7.

The protein resides in the cytoplasm. It is found in the cytoskeleton. It localises to the cilium basal body. Its subcellular location is the microtubule organizing center. The protein localises to the centrosome. The protein resides in the centriole. It is found in the cell junction. It localises to the adherens junction. Its function is as follows. Involved in vesicle trafficking and required for ciliogenesis, formation of primary non-motile cilium, and recruitment of RAB8A to the basal body of primary cilium. Component of the tectonic-like complex, a complex localized at the transition zone of primary cilia and acting as a barrier that prevents diffusion of transmembrane proteins between the cilia and plasma membranes. Involved in neuronal differentiation. As a positive modulator of classical Wnt signaling, may play a crucial role in ciliary signaling during cerebellum embryonic development. This chain is Jouberin (Ahi1), found in Rattus norvegicus (Rat).